We begin with the raw amino-acid sequence, 366 residues long: Class I histocompatibility antigen, Gogo-C*0203 alpha chain (366 aa).

The N-terminal stretch at Met1–Ala24 is a signal peptide. The interval Gly25–Asp114 is alpha-1. Topologically, residues Gly25–Ile308 are extracellular. Residue Asn110 is glycosylated (N-linked (GlcNAc...) asparagine). The tract at residues Gly115–Ala206 is alpha-2. Intrachain disulfides connect Cys125-Cys188 and Cys227-Cys283. The alpha-3 stretch occupies residues Glu207–Trp298. Residues Pro209 to Arg297 form the Ig-like C1-type domain. The tract at residues Glu299 to Ile308 is connecting peptide. A helical transmembrane segment spans residues Val309–Met332. The Cytoplasmic portion of the chain corresponds to Cys333–Ala366.

The protein belongs to the MHC class I family. Heterodimer of an alpha chain and a beta chain (beta-2-microglobulin).

It localises to the membrane. Functionally, involved in the presentation of foreign antigens to the immune system. In Gorilla gorilla gorilla (Western lowland gorilla), this protein is Class I histocompatibility antigen, Gogo-C*0203 alpha chain.